The sequence spans 318 residues: Isoeugenol synthase 1 (318 aa).

Residues 10-13, 32-43, R33, 84-86, 109-111, K131, and 151-153 contribute to the NADP(+) site; these read TGYI, ARPLTPDSTPSS, VPM, SEF, and NCF. The Proton donor/acceptor role is filled by K131. Residue P260 coordinates substrate.

Belongs to the NmrA-type oxidoreductase family. As to expression, mostly expressed in petals, and, to a lower extent, in sepals, stamens and pistils.

It carries out the reaction (E)-isoeugenol + acetate + NADP(+) = (E)-coniferyl acetate + NADPH. It functions in the pathway aromatic compound metabolism; phenylpropanoid biosynthesis. Its function is as follows. Catalyzes the synthesis of the phenylpropene isoeugenol from coniferyl acetate. Phenylpropenes are the primary constituents of various essential plant oils. They are produced as antimicrobial and antianimal compounds, or as floral attractants of pollinators. Isoeugenol is a characteristic aromatic constituent of spices and a floral volatile compound. This Clarkia breweri (Fairy fans) protein is Isoeugenol synthase 1.